A 309-amino-acid polypeptide reads, in one-letter code: Short-chain dehydrogenase/reductase ARMGADRAFT_1018437 (309 aa).

NADP(+)-binding residues include K64, D86, and N113. Residue S167 is the Proton donor of the active site. The NADP(+) site is built by Y196 and K200. Y196 (proton acceptor) is an active-site residue. The active-site Lowers pKa of active site Tyr is the K200.

The protein belongs to the short-chain dehydrogenases/reductases (SDR) family.

The protein operates within secondary metabolite biosynthesis. Functionally, short-chain dehydrogenase/reductase, part of the gene cluster that mediates the biosynthesis of melleolides, a range of antifungal and phytotoxic polyketide derivatives composed of an orsellinic acid (OA) moiety esterified to various sesquiterpene alcohols. The first step in melleolides biosynthesis is performed by the delta(6)-protoilludene synthase PRO1 which catalyzes the cyclization of farnesyl diphosphate to protoilludene. The orsellinic acid synthase armB produces OA by condensing acetyl-CoA with 3 malonyl-CoA units in a three-round chain elongation reaction folowed by a C2-C7 ring closure. ArmB further catalyzes the trans-esterification of OA to the various sesquiterpene alcohols resulting from the hydroxylation of protoilludene. The melleolides cluster also includes 5 cytochrome P450 monooxygenases, 4 NAD(+)-dependent oxidoreductases, one flavin-dependent oxidoreductase, and one O-methyltransferase. The cytochrome P450 monooxygenases may be involved in protoilludene hydroxylation to elaborate melleolides with multiple alcohol groups, such as melleolide D, which carries alcohol functionalities at C-4, C-5, C-10, and C-13. The role of the NAD(+)-dependent enzymes remains unknown. Numerous melleolides, including arnamial, show 5'-O-methylation of the aromatic moiety which may be catalyzed by the methyltransferase encoded in the cluster. The flavin-dependent oxidoreductase might represent the dehydrogenase yielding the aldehyde in position 1 of arnamial and other melleolides. Finally, several halogenase localized outside of the cluster, are able to catalyze the transfer of a single chlorine atom to the melleolide backbone, resulting in a 6'-chloromelleolide product. The polypeptide is Short-chain dehydrogenase/reductase ARMGADRAFT_1018437 (Armillaria gallica (Bulbous honey fungus)).